The chain runs to 565 residues: MVAEDAPVRATCRVLFRTTTLIFLCTLLALSISILYESLITQKQIMSQAGSTGSNSGLGSITDLLNNILSVANQIIYNSAVALPLQLDTLESTLLTAIKSLQTSDKLEQNCSWSAALINDNRYINGINQFYFSIAEGRNLTLGPLLNMPSFIPTATTPEGCTRIPSFSLTKTHWCYTHNVILNGCQDHVSSNQFVSMGIIEPTSAGFPFFRTLKTLYLSDGVNRKSCSISTVPGGCMMYCFVSTQPERDDYFSAAPPEQRIIIMYYNDTIVERIINPPGVLDVWATLNPGTGSGVYYLGWVLFPIYGGVIKGTSLWNNQANKYFIPQMVAALCSQNQATQVQNAKSSYYSSWFGNRMIQSGILACPLRQDLTNECLVLPFSNDQVLMGAEGRLYMYGDSVYYYQRSNSWWPMTMLYKVTITFTNGQPSAISAQNVPTQQVPRPGTGDCSATNRCPGFCLTGVYADAWLLTNPSSTSTFGSEATFTGSYLNTATQRINPTMYIANNTQIISSQQFGSSGQEAAYGHTTCFRDTGSVMVYCIYIIELSSSLLGQFQIVPFIRQVTLS.

At 1–19 (MVAEDAPVRATCRVLFRTT) the chain is on the intravirion side. Residues 20–40 (TLIFLCTLLALSISILYESLI) traverse the membrane as a helical segment. Residues 41-565 (TQKQIMSQAG…VPFIRQVTLS (525 aa)) are Virion surface-facing. N-linked (GlcNAc...) asparagine; by host glycosylation occurs at N139. Disulfide bonds link C161/C185, C175/C236, and C227/C240. The interval 223–228 (NRKSCS) is involved in neuraminidase activity. N267 is a glycosylation site (N-linked (GlcNAc...) asparagine; by host). Cystine bridges form between C333/C454, C365/C375, and C448/C458. N504 is a glycosylation site (N-linked (GlcNAc...) asparagine; by host). A disulfide bond links C528 and C539.

The protein belongs to the paramyxoviruses hemagglutinin-neuraminidase family. As to quaternary structure, homotetramer; composed of disulfide-linked homodimers. Interacts with F protein trimer.

It localises to the virion membrane. It is found in the host cell membrane. The catalysed reaction is Hydrolysis of alpha-(2-&gt;3)-, alpha-(2-&gt;6)-, alpha-(2-&gt;8)- glycosidic linkages of terminal sialic acid residues in oligosaccharides, glycoproteins, glycolipids, colominic acid and synthetic substrates.. In terms of biological role, attaches the virus to sialic acid-containing cell receptors and thereby initiating infection. Binding of HN protein to the receptor induces a conformational change that allows the F protein to trigger virion/cell membranes fusion. Functionally, neuraminidase activity ensures the efficient spread of the virus by dissociating the mature virions from the neuraminic acid containing glycoproteins. This Canis lupus familiaris (Dog) protein is Hemagglutinin-neuraminidase (HN).